The following is a 1179-amino-acid chain: DNA-directed RNA polymerase subunit beta' (1179 aa).

Residues cysteine 60, cysteine 62, cysteine 75, and cysteine 78 each coordinate Zn(2+). 3 residues coordinate Mg(2+): aspartate 449, aspartate 451, and aspartate 453. Positions 796, 871, 878, and 881 each coordinate Zn(2+).

It belongs to the RNA polymerase beta' chain family. As to quaternary structure, the RNAP catalytic core consists of 2 alpha, 1 beta, 1 beta' and 1 omega subunit. When a sigma factor is associated with the core the holoenzyme is formed, which can initiate transcription. Requires Mg(2+) as cofactor. Zn(2+) is required as a cofactor.

The catalysed reaction is RNA(n) + a ribonucleoside 5'-triphosphate = RNA(n+1) + diphosphate. In terms of biological role, DNA-dependent RNA polymerase catalyzes the transcription of DNA into RNA using the four ribonucleoside triphosphates as substrates. The protein is DNA-directed RNA polymerase subunit beta' of Symbiobacterium thermophilum (strain DSM 24528 / JCM 14929 / IAM 14863 / T).